Consider the following 149-residue polypeptide: 3-dehydroquinate dehydratase (149 aa).

Y26 functions as the Proton acceptor in the catalytic mechanism. 3 residues coordinate substrate: N77, H83, and D90. The active-site Proton donor is the H103. Substrate contacts are provided by residues 104–105 and R114; that span reads LS.

This sequence belongs to the type-II 3-dehydroquinase family. In terms of assembly, homododecamer.

It carries out the reaction 3-dehydroquinate = 3-dehydroshikimate + H2O. It functions in the pathway metabolic intermediate biosynthesis; chorismate biosynthesis; chorismate from D-erythrose 4-phosphate and phosphoenolpyruvate: step 3/7. Its function is as follows. Catalyzes a trans-dehydration via an enolate intermediate. The protein is 3-dehydroquinate dehydratase of Aliivibrio salmonicida (strain LFI1238) (Vibrio salmonicida (strain LFI1238)).